A 266-amino-acid polypeptide reads, in one-letter code: MTMNTPRPRSQPPPPHPPLFKPTTPPPPPLLSTSTSTSPPHDFSFAHYLSSPPPSVQRRGRADMSRTPPLGRVGSDLSHNNYSSKANQHRQTGSSSSSSSKEKDREYKAKSKASSPFFSGLGGSWRSGLSRDEEVKRKAKAKTRGLDVGQWVKKYMASMVEHLLASFSRHGGGEREKREQQRRRPHSFSAHGPSALREQRERWRRRRGQLSSAPASLRASPVNSGHLSVGGSVKVSTSSEESTMEELQSAIEAAIAHCKNSITVAK.

2 disordered regions span residues 1-144 (MTMN…AKTR) and 167-242 (FSRH…SEES). A compositionally biased stretch (pro residues) spans 9 to 30 (RSQPPPPHPPLFKPTTPPPPPL). Over residues 31-40 (LSTSTSTSPP) the composition is skewed to low complexity. The span at 77 to 93 (LSHNNYSSKANQHRQTG) shows a compositional bias: polar residues. A compositionally biased stretch (basic and acidic residues) spans 100–109 (SKEKDREYKA). Low complexity-rich tracts occupy residues 210 to 221 (LSSAPASLRASP) and 229 to 241 (VGGS…SSEE).

In terms of biological role, negative regulator of brassinosteroid signaling. This chain is Probable BRI1 kinase inhibitor 1 (BKI1), found in Oryza sativa subsp. indica (Rice).